We begin with the raw amino-acid sequence, 218 residues long: Glutathione S-transferase class-mu 26 kDa isozyme (218 aa).

The GST N-terminal domain maps to 1–83; the sequence is MAPKFGYWKV…YIADKHNMLG (83 aa). Glutathione contacts are provided by residues 7–8, 41–45, 54–55, and 67–68; these read YW, WSNDK, NL, and QS. A GST C-terminal domain is found at 85–203; sequence CPKERAEISM…NSSRYIKWPL (119 aa). Y111 lines the substrate pocket.

It belongs to the GST superfamily. Mu family. As to quaternary structure, homodimer. In terms of tissue distribution, tegument and in subtegumentary parenchymal cells. GST 26 may be actively excreted by adult worms.

The enzyme catalyses RX + glutathione = an S-substituted glutathione + a halide anion + H(+). Its function is as follows. Conjugation of reduced glutathione to a wide number of exogenous and endogenous hydrophobic electrophiles. In terms of biological role, GST isoenzymes appear to play a central role in the parasite detoxification system. Other functions are also suspected including a role in increasing the solubility of haematin in the parasite gut. The polypeptide is Glutathione S-transferase class-mu 26 kDa isozyme (Schistosoma mansoni (Blood fluke)).